The sequence spans 123 residues: Defensin beta 118 (123 aa).

Positions 1–19 (MKLLLLALPMLVLLPQVIP) are cleaved as a signal peptide. 3 disulfides stabilise this stretch: Cys-27–Cys-54, Cys-34–Cys-48, and Cys-38–Cys-55. Positions 65–123 (VPATSPTPLSDSTPGIIDDILTVRFTTDYFEVSSKKDMVEESEAGRGTETSLPNVHHSS) are excised as a propeptide. Basic and acidic residues predominate over residues 100 to 110 (KDMVEESEAGR). Residues 100 to 123 (KDMVEESEAGRGTETSLPNVHHSS) form a disordered region. Residues 112-123 (TETSLPNVHHSS) are compositionally biased toward polar residues.

It belongs to the beta-defensin family. The three-dimensional structure formed by the three intramolecular disulfide bridges is indispensable for antimicrobial activity. In terms of tissue distribution, high-level and epididymis-specific expression. Most abundant in the epithelium of the caput and present in the epididymis lumen and bound to sperm. Also expressed in pancreas.

The protein localises to the secreted. Its function is as follows. Host defense peptide that exhibits antimicrobial activity against both Gram-negative bacteria, such as E.coli and S.typhimurium, and Gram-positive bacteria, such as S.aureus and B.subtilis. Inhibits cell adhesion of E.coli on intestinal epithelial enterocytes. Causes rapid permeabilization of both the outer and inner membrane of E.coli, leading to morphological alterations on the bacterial surface. Binds to bacterial lipopolysaccharides (LPS) with high affinity, and may thereby be involved in immunoregulation through LPS neutralization. May contribute to epididymal innate immunity and protect the sperm against attack by microorganisms. This chain is Defensin beta 118 (DEFB118), found in Homo sapiens (Human).